A 123-amino-acid polypeptide reads, in one-letter code: MAVSHSVKERTISENSLIILLQGLQGRVTTVDLRDESVAHGRIDNVDAFMNIRLAKVTYTDRWGHQVKLDDLFVTGRNVRYVHIPDDVNITSTIEQQLQIIHRVRNFGGKGQGRWEFPPKNCK.

A Sm domain is found at 16–88 (SLIILLQGLQ…VRYVHIPDDV (73 aa)).

This sequence belongs to the snRNP Sm proteins family. Component of the heptameric ring U7 snRNP complex, or U7 Sm protein core complex, at least composed of LSM10, LSM11, SNRPB, SNRPD3, SNRPE, SNRPF, SNRPG and U7 snRNA. Formation of the U7 snRNP is an ATP-dependent process mediated by a specialized SMN complex containing at least the Sm protein core complex and additionally, the U7-specific LSM10 and LSM11 proteins. Interacts with CLNS1A and SMN. Post-translationally, not methylated. Methylation is not necessary for interaction with SMN.

The protein localises to the nucleus. Functionally, appears to function in the U7 snRNP complex that is involved in histone 3'-end processing. Increases U7 snRNA levels but not histone 3'-end pre-mRNA processing activity, when overexpressed. Required for cell cycle progression from G1 to S phases. Binds specifically to U7 snRNA. Binds to the downstream cleavage product (DCP) of histone pre-mRNA in a U7 snRNP dependent manner. This Homo sapiens (Human) protein is U7 snRNA-associated Sm-like protein LSm10 (LSM10).